An 872-amino-acid chain; its full sequence is UPF0182 protein Noc_0961 (872 aa).

7 helical membrane-spanning segments follow: residues 8–28 (FLIL…AGFE), 56–76 (LVVF…NFWV), 109–129 (SLWI…WPLF), 159–179 (LFSF…FLLL), 207–227 (WHLS…FFLQ), 254–274 (PFIW…LLFI), and 282–302 (TLAV…FHFL).

It belongs to the UPF0182 family.

It localises to the cell membrane. In Nitrosococcus oceani (strain ATCC 19707 / BCRC 17464 / JCM 30415 / NCIMB 11848 / C-107), this protein is UPF0182 protein Noc_0961.